Reading from the N-terminus, the 443-residue chain is Glutamate--tRNA ligase 2 (443 aa).

The 'HIGH' region motif lies at 7–17; that stretch reads PSPTGYLHVGN. Positions 236-240 match the 'KMSKS' region motif; that stretch reads KISKR. Position 239 (lysine 239) interacts with ATP.

This sequence belongs to the class-I aminoacyl-tRNA synthetase family. Glutamate--tRNA ligase type 1 subfamily. In terms of assembly, monomer.

The protein localises to the cytoplasm. The enzyme catalyses tRNA(Glu) + L-glutamate + ATP = L-glutamyl-tRNA(Glu) + AMP + diphosphate. Functionally, catalyzes the attachment of glutamate to tRNA(Glu) in a two-step reaction: glutamate is first activated by ATP to form Glu-AMP and then transferred to the acceptor end of tRNA(Glu). This chain is Glutamate--tRNA ligase 2, found in Ehrlichia canis (strain Jake).